Reading from the N-terminus, the 333-residue chain is DNA-directed RNA polymerase subunit alpha (333 aa).

Residues methionine 1–glutamate 235 are alpha N-terminal domain (alpha-NTD). The interval phenylalanine 253–arginine 333 is alpha C-terminal domain (alpha-CTD).

The protein belongs to the RNA polymerase alpha chain family. In terms of assembly, homodimer. The RNAP catalytic core consists of 2 alpha, 1 beta, 1 beta' and 1 omega subunit. When a sigma factor is associated with the core the holoenzyme is formed, which can initiate transcription.

It carries out the reaction RNA(n) + a ribonucleoside 5'-triphosphate = RNA(n+1) + diphosphate. Its function is as follows. DNA-dependent RNA polymerase catalyzes the transcription of DNA into RNA using the four ribonucleoside triphosphates as substrates. This Methylibium petroleiphilum (strain ATCC BAA-1232 / LMG 22953 / PM1) protein is DNA-directed RNA polymerase subunit alpha.